The following is a 316-amino-acid chain: Phosphoribosylaminoimidazole-succinocarboxamide synthase (316 aa).

The protein belongs to the SAICAR synthetase family.

It carries out the reaction 5-amino-1-(5-phospho-D-ribosyl)imidazole-4-carboxylate + L-aspartate + ATP = (2S)-2-[5-amino-1-(5-phospho-beta-D-ribosyl)imidazole-4-carboxamido]succinate + ADP + phosphate + 2 H(+). It functions in the pathway purine metabolism; IMP biosynthesis via de novo pathway; 5-amino-1-(5-phospho-D-ribosyl)imidazole-4-carboxamide from 5-amino-1-(5-phospho-D-ribosyl)imidazole-4-carboxylate: step 1/2. The protein is Phosphoribosylaminoimidazole-succinocarboxamide synthase of Flavobacterium psychrophilum (strain ATCC 49511 / DSM 21280 / CIP 103535 / JIP02/86).